A 195-amino-acid chain; its full sequence is MAGMRRLELAEALHLGPGWRHACHAMLYAPDPGLLFGRIPLRYAVLMQMRFDGRLGFPGGFVDLRDGSLEDGLNRELGEELGEAAAAFRVERADYRSSHAGSRPRVVAHFYTKLLTLEQLTAVEMGAPRARDHGLEVLGLVRVPLYTLRDRVGGLPAFLENTFIGNAREQLLEAVQNLGLLEPGSFAHLKISTPP.

The region spanning 18–168 is the Nudix hydrolase domain; sequence GWRHACHAML…LENTFIGNAR (151 aa). The substrate site is built by His24, Arg50, and Phe57. Mn(2+)-binding residues include Gly59, Glu76, Glu80, and His99. The short motif at 61-82 is the Nudix box element; that stretch reads FVDLRDGSLEDGLNRELGEELG. Asn166 and Gln170 together coordinate substrate. Glu173 serves as a coordination point for Mn(2+).

It belongs to the Nudix hydrolase family. NUDT16 subfamily. Homodimer. Mg(2+) is required as a cofactor. Requires Mn(2+) as cofactor. The cofactor is Co(2+).

The protein resides in the nucleus. It localises to the nucleolus. It is found in the nucleoplasm. The protein localises to the cytoplasm. It catalyses the reaction a 5'-end (N(7)-methyl 5'-triphosphoguanosine)-ribonucleoside in mRNA + H2O = N(7)-methyl-GDP + a 5'-end phospho-ribonucleoside in mRNA + 2 H(+). The enzyme catalyses IDP + H2O = IMP + phosphate + H(+). The catalysed reaction is dIDP + H2O = dIMP + phosphate + H(+). It carries out the reaction a 5'-end NAD(+)-phospho-ribonucleoside in mRNA + H2O = a 5'-end phospho-ribonucleoside in mRNA + NAD(+) + H(+). It catalyses the reaction a 5'-end FAD-phospho-ribonucleoside in mRNA + H2O = a 5'-end phospho-adenosine-phospho-ribonucleoside in mRNA + FMN + 2 H(+). The enzyme catalyses a 5'-end CoA-ribonucleoside in mRNA + H2O = a 5'-end phospho-adenosine-phospho-ribonucleoside in mRNA + (R)-4'-phosphopantetheine + 2 H(+). RNA-binding and decapping enzyme that catalyzes the cleavage of the cap structure of snoRNAs and mRNAs in a metal-dependent manner. Part of the U8 snoRNP complex that is required for the accumulation of mature 5.8S and 28S rRNA. Has diphosphatase activity and removes m7G and/or m227G caps from U8 snoRNA and leaves a 5'monophosphate on the RNA. Also catalyzes the cleavage of the cap structure on mRNAs. Does not hydrolyze cap analog structures like 7-methylguanosine nucleoside triphosphate (m7GpppG). Also hydrolysis m7G- and m227G U3-capped RNAs but with less efficiencies. Has broad substrate specificity with manganese or cobalt as cofactor and can act on various RNA species. Binds to the U8 snoRNA; metal is not required for RNA-binding. May play a role in the regulation of snoRNAs and mRNAs degradation. Also acts as a phosphatase; hydrolyzes the non-canonical purine nucleotides inosine diphosphate (IDP) and deoxyinosine diphosphate (dITP) as well as guanosine diphosphate (GDP), deoxyguanosine diphosphate (dGDP), xanthine diphosphate (XDP), inosine triphosphate (ITP) and deoxyinosine triphosphate (ITP) to their respective monophosphate derivatives and does not distinguish between the deoxy- and ribose forms. The order of activity with different substrates is IDP &gt; dIDP &gt;&gt; GDP = dGDP &gt; XDP = ITP = dITP. Binds strongly to GTP, ITP and XTP. Participates in the hydrolysis of dIDP/IDP and probably excludes non-canonical purines from RNA and DNA precursor pools, thus preventing their incorporation into RNA and DNA and avoiding chromosomal lesions. Exhibits decapping activity towards NAD-capped RNAs and FAD-capped RNAs. Exhibits decapping activity towards dpCoA-capped RNAs in vitro. This is U8 snoRNA-decapping enzyme (NUDT16) from Ovis aries (Sheep).